The chain runs to 502 residues: uncharacterized protein (502 aa).

A helical membrane pass occupies residues 1 to 21 (MKIFLVFLSVFFFNGCFGLVY). PLD phosphodiesterase domains lie at 162 to 189 (IKKR…GDNY) and 396 to 423 (TKHS…DPRS).

It belongs to the phospholipase D family. Cardiolipin synthase subfamily.

Its subcellular location is the cell membrane. This is an uncharacterized protein from Helicobacter pylori (strain ATCC 700392 / 26695) (Campylobacter pylori).